We begin with the raw amino-acid sequence, 254 residues long: MAVTDVFARRATLRRSLRLLADFRYEQRDPARFYRTLAADTAAMIGDLWLATHSEPPVGRTLLDVGGGPGYFATAFSDAGVGYIGVEPDPDEMHAAGPAFTGRPGMFVRASGMALPFADDSVDICLSSNVAEHVPRPWQLGTEMLRVTKPGGLVVLSYTVWLGPFGGHEMGLSHYLGGARAAARYVRKHGHPAKNNYGSSLFAVSAAEGLRWAAGTGAALAVFPRYHPRWAWWLTSVPVLREFLVSNLVLVLTP.

It belongs to the methyltransferase superfamily.

This is an uncharacterized protein from Mycobacterium tuberculosis (strain ATCC 25177 / H37Ra).